Here is a 201-residue protein sequence, read N- to C-terminus: Phosphoheptose isomerase 2 (201 aa).

The 160-residue stretch at Val39–Ser198 folds into the SIS domain. Asn54–Gly56 contributes to the substrate binding site. The Zn(2+) site is built by His63 and Glu67. Substrate contacts are provided by residues Glu67, Asn96–Asp97, Ser122–Ser124, Ser127, and Gln174. 2 residues coordinate Zn(2+): Gln174 and His182.

Belongs to the SIS family. GmhA subfamily. As to quaternary structure, homotetramer. Requires Zn(2+) as cofactor.

Its subcellular location is the cytoplasm. The catalysed reaction is 2 D-sedoheptulose 7-phosphate = D-glycero-alpha-D-manno-heptose 7-phosphate + D-glycero-beta-D-manno-heptose 7-phosphate. The protein operates within carbohydrate biosynthesis; D-glycero-D-manno-heptose 7-phosphate biosynthesis; D-glycero-alpha-D-manno-heptose 7-phosphate and D-glycero-beta-D-manno-heptose 7-phosphate from sedoheptulose 7-phosphate: step 1/1. It participates in capsule biogenesis; capsule polysaccharide biosynthesis. Catalyzes the isomerization of sedoheptulose 7-phosphate in D-glycero-D-manno-heptose 7-phosphate. No activity with L-galacto-heptulose, L-galacto-heptulose 7-phosphate or D-manno-heptulose. This Campylobacter jejuni subsp. jejuni serotype O:2 (strain ATCC 700819 / NCTC 11168) protein is Phosphoheptose isomerase 2.